Consider the following 694-residue polypeptide: Putative serine/threonine-protein kinase R679 (694 aa).

The Protein kinase domain maps to 167 to 548; that stretch reads ITKNKTVGKG…ITNILKHLFT (382 aa). ATP is bound by residues 173–181 and Lys-196; that span reads VGKGAAGIA. The active-site Proton acceptor is the Asp-395.

The protein belongs to the protein kinase superfamily. Ser/Thr protein kinase family.

It is found in the virion. The enzyme catalyses L-seryl-[protein] + ATP = O-phospho-L-seryl-[protein] + ADP + H(+). It carries out the reaction L-threonyl-[protein] + ATP = O-phospho-L-threonyl-[protein] + ADP + H(+). This Acanthamoeba polyphaga (Amoeba) protein is Putative serine/threonine-protein kinase R679.